The following is a 249-amino-acid chain: Electron transfer flavoprotein subunit beta (249 aa).

Belongs to the ETF beta-subunit/FixA family. Heterodimer of an alpha and a beta subunit. The cofactor is FAD. AMP serves as cofactor.

Functionally, the electron transfer flavoprotein serves as a specific electron acceptor for other dehydrogenases. It transfers the electrons to the main respiratory chain via ETF-ubiquinone oxidoreductase (ETF dehydrogenase). In Bradyrhizobium diazoefficiens (strain JCM 10833 / BCRC 13528 / IAM 13628 / NBRC 14792 / USDA 110), this protein is Electron transfer flavoprotein subunit beta (etfB).